A 181-amino-acid chain; its full sequence is MSDTLKKYYYKKIVPKLIDQFKYKNIHQVPKLVKVTINRGLGEASQNAKALDSSIKEIATITGQKPVVTRAKKAIAGFKIRQGMPVGVMVTLRSQRMYEFIERLINLALPRIRDFRGINPKSFDGRGNYSLGVKEQLIFPEIEYDKIDQIRGMDISIITTAKTDEEGRALLKEMGMPFRSN.

Belongs to the universal ribosomal protein uL5 family. In terms of assembly, part of the 50S ribosomal subunit; part of the 5S rRNA/L5/L18/L25 subcomplex. Contacts the 5S rRNA and the P site tRNA. Forms a bridge to the 30S subunit in the 70S ribosome.

In terms of biological role, this is one of the proteins that bind and probably mediate the attachment of the 5S RNA into the large ribosomal subunit, where it forms part of the central protuberance. In the 70S ribosome it contacts protein S13 of the 30S subunit (bridge B1b), connecting the 2 subunits; this bridge is implicated in subunit movement. Contacts the P site tRNA; the 5S rRNA and some of its associated proteins might help stabilize positioning of ribosome-bound tRNAs. This Trichodesmium erythraeum (strain IMS101) protein is Large ribosomal subunit protein uL5.